Here is a 291-residue protein sequence, read N- to C-terminus: Beta-lactamase CTX-M-15 (291 aa).

Positions 1-28 are cleaved as a signal peptide; sequence MVKKSLRQFTLMATATVTLLLGSVPLYA. The active-site Nucleophile; acyl-ester intermediate is serine 73. A beta-lactam contacts are provided by lysine 76, serine 133, glutamate 169, and serine 240.

Belongs to the class-A beta-lactamase family. As to quaternary structure, monomer.

It localises to the secreted. It catalyses the reaction a beta-lactam + H2O = a substituted beta-amino acid. Its activity is regulated as follows. Inhibited by the beta-lactamase-blocking agents clavulanic acid and avibactam, via a covalent binding to Ser-73. Its function is as follows. Extended-spectrum beta-lactamase (ESBL) which confers resistance to penicillins, as well as first, second, third and fourth-generation cephalosporins. Has cefotaxime- and ceftazidime-hydrolyzing activity. Inactive against the carbapenem antibiotics, imipenem, meropenem and ertapenem. This is Beta-lactamase CTX-M-15 from Escherichia coli O25b:H4.